Consider the following 542-residue polypeptide: Global nitrogen regulator NrpR (542 aa).

Residues Ile-12–Leu-77 form a winged helix-turn-helix region. 2 NRD regions span residues Arg-85–Ile-320 and Arg-321–Ile-542.

It belongs to the NrpR family. As to quaternary structure, homodimer.

With respect to regulation, under nitrogen limitation, binding of the intracellular nitrogen metabolite 2-oxoglutarate to NrpR decreases the binding affinity of NrpR to DNA, leading to initiation of transcription. Transcriptional repressor of nitrogen fixation and assimilation genes. Binds to two tandem operators in the glnA and nif promoters, thereby blocking transcription of the genes. This is Global nitrogen regulator NrpR from Methanocaldococcus jannaschii (strain ATCC 43067 / DSM 2661 / JAL-1 / JCM 10045 / NBRC 100440) (Methanococcus jannaschii).